Here is a 142-residue protein sequence, read N- to C-terminus: Midkine-A (142 aa).

The N-terminal stretch at 1 to 20 is a signal peptide; it reads MELRAFCVILLITVLAVSSQ. Disulfide bonds link cysteine 36/cysteine 60, cysteine 44/cysteine 69, cysteine 51/cysteine 73, cysteine 83/cysteine 115, and cysteine 93/cysteine 125.

This sequence belongs to the pleiotrophin family. Expression at the mid-gastrula stage begins in the neural anlage, and becomes increasingly prominent in the central nervous system and head mesenchyme during neurula stages. Although the mRNA is localized to the developing central nervous system (CNS), the protein is deposited at the neuromuscular junction (NMJ). In the tailbud stage embryo, expressed in the head and tail regions as well as in the CNS. In adults, expression is highest in the brain, eye and bone, with lower expression in the heart and lung. Not expressed in the ovary.

The protein resides in the secreted. In terms of biological role, secreted protein that functions as a cytokine and growth factor and mediates its signal through cell-surface proteoglycan and non-proteoglycan receptors. Binds cell-surface proteoglycan receptors via their chondroitin sulfate (CS) groups. Thereby regulates many processes like inflammatory response, cell proliferation, cell adhesion, cell growth, cell survival, tissue regeneration, cell differentiation and cell migration. Inhibits mesoderm formation and promotes neural formation during development. Plays a role in development of the neuromuscular junction (NMJ). Has antibacterial activity against both Gram-positive and Gram-negative bacteria. This chain is Midkine-A (mdk-a), found in Xenopus laevis (African clawed frog).